Consider the following 631-residue polypeptide: MAAAAGDGTVKPLQSAMKLANGAIELDTGNRPREAYTEYLRSIHYISQVLLEEVETTKEAGETVPPDTSKMLKLAQQCLERAQSTAAKLGKTRLKPTMPAAAPIPQPAGRHRRVYSDEGGKLSPFLPPEIFQKLQGAESQSCKKELTPLEEASLQNQKLKAAYEARMARLDPSQAMQKTSLTLSLQRQMMENLVIAKAREETLQRKMEERRLRLQEAANRRFCSQVALTPEEREQRALYAAILEYEQDHDWPKHWKAKLKRNPGDLSLVTSLVSHLLSLPDHPIAQLLRRLQCSVYSALYPAVSRAAAPAPGCCPPTPNPGSRRLRPSQSLHCMLSPPEPSAAPRPQDSPPTPPLQPGPVGSPSPLGDTASGLPDKDSSFEDLEQFLGTSERQGRGRGVQPEPQLQQLKTAVEEIHNAVDRLLSLTLLAFEGLNTAASKDRCLACIEEPFFSPLWPLLLALYRSVHRAREAALSRSMELYRNAPPTAIGIPTKLLPQNPEAKGATGYPYCAAAQELGLLVLESCPQKKLECIVRTLRIICVCAEDYCPTPEATPQAGPPPIAAAAIGADDLLPILSFVVLRSGLPQLVSECAALEEFIHEGYLIGEEGYCLTSLQSALSYVELLPRGGLAK.

Ser116 carries the post-translational modification Phosphoserine. A coiled-coil region spans residues 187–221 (RQMMENLVIAKAREETLQRKMEERRLRLQEAANRR). Positions 318–379 (PNPGSRRLRP…ASGLPDKDSS (62 aa)) are disordered. A compositionally biased stretch (pro residues) spans 337–362 (PPEPSAAPRPQDSPPTPPLQPGPVGS). In terms of domain architecture, VPS9 spans 467 to 630 (RAREAALSRS…VELLPRGGLA (164 aa)).

As to expression, ubiquitous.

This Homo sapiens (Human) protein is VPS9 domain-containing protein 1 (VPS9D1).